Consider the following 706-residue polypeptide: Glycine--tRNA ligase beta subunit (706 aa).

This sequence belongs to the class-II aminoacyl-tRNA synthetase family. As to quaternary structure, tetramer of two alpha and two beta subunits.

The protein resides in the cytoplasm. It carries out the reaction tRNA(Gly) + glycine + ATP = glycyl-tRNA(Gly) + AMP + diphosphate. In Acidobacterium capsulatum (strain ATCC 51196 / DSM 11244 / BCRC 80197 / JCM 7670 / NBRC 15755 / NCIMB 13165 / 161), this protein is Glycine--tRNA ligase beta subunit.